Reading from the N-terminus, the 220-residue chain is Putative NAD(P)H nitroreductase SERP2086 (220 aa).

It belongs to the nitroreductase family. FMN serves as cofactor.

This Staphylococcus epidermidis (strain ATCC 35984 / DSM 28319 / BCRC 17069 / CCUG 31568 / BM 3577 / RP62A) protein is Putative NAD(P)H nitroreductase SERP2086.